The following is a 279-amino-acid chain: Prohibitin-4, mitochondrial (279 aa).

Gly-2 carries the post-translational modification N-acetylglycine. At 2–6 (GSQQV) the chain is on the mitochondrial matrix side. A helical; Signal-anchor for type II membrane protein transmembrane segment spans residues 7 to 28 (AISFLTNLAKAAFGLGVAATAL). Topologically, residues 29-279 (NSSLYTVDGG…SMLFNLNPGR (251 aa)) are mitochondrial intermembrane.

The protein belongs to the prohibitin family. As to quaternary structure, component of a prohibitin multimeric complex in mitochondrial membranes. As to expression, mostly expressed in proliferative tissues, including vasculature, shoot and root apical tissues. Accumulates in dry seeds.

It localises to the mitochondrion inner membrane. Its function is as follows. Prohibitin probably acts as a holdase/unfoldase for the stabilization of newly synthesized mitochondrial proteins. This Arabidopsis thaliana (Mouse-ear cress) protein is Prohibitin-4, mitochondrial (PHB4).